The sequence spans 1217 residues: ATP-dependent helicase/nuclease subunit A (1217 aa).

Residues 10 to 475 (VIWTDAQWQS…IDLSQNFRSR (466 aa)) form the UvrD-like helicase ATP-binding domain. 31–38 (AAAGSGKT) is an ATP binding site. Positions 476–786 (KEVLSTTNYI…RMMTIHSSKG (311 aa)) constitute a UvrD-like helicase C-terminal domain.

It belongs to the helicase family. AddA subfamily. Heterodimer of AddA and AddB/RexB. The cofactor is Mg(2+).

It carries out the reaction Couples ATP hydrolysis with the unwinding of duplex DNA by translocating in the 3'-5' direction.. The catalysed reaction is ATP + H2O = ADP + phosphate + H(+). The heterodimer acts as both an ATP-dependent DNA helicase and an ATP-dependent, dual-direction single-stranded exonuclease. Recognizes the chi site generating a DNA molecule suitable for the initiation of homologous recombination. The AddA nuclease domain is required for chi fragment generation; this subunit has the helicase and 3' -&gt; 5' nuclease activities. This chain is ATP-dependent helicase/nuclease subunit A, found in Staphylococcus aureus (strain USA300).